Here is a 147-residue protein sequence, read N- to C-terminus: MKVKIISVGKVKDKGLNELINYYAKQIKTIEMVEITDEASITGMEKEGQKILSKIAKDSYVISLAIEGKMLDSVEFADTLDHVTTNFGPSITFIIGGSFGLSHAVKEKSNLLLSFSKMTFPHQLMKLFLVEQIFRAQAILNNHPYHK.

Residues L64, G96, and 115 to 120 (FSKMTF) each bind S-adenosyl-L-methionine.

Belongs to the RNA methyltransferase RlmH family. Homodimer.

Its subcellular location is the cytoplasm. The catalysed reaction is pseudouridine(1915) in 23S rRNA + S-adenosyl-L-methionine = N(3)-methylpseudouridine(1915) in 23S rRNA + S-adenosyl-L-homocysteine + H(+). Its function is as follows. Specifically methylates the pseudouridine at position 1915 (m3Psi1915) in 23S rRNA. This chain is Ribosomal RNA large subunit methyltransferase H, found in Acholeplasma laidlawii (strain PG-8A).